A 336-amino-acid polypeptide reads, in one-letter code: Phosphatidylglycerol--prolipoprotein diacylglyceryl transferase (336 aa).

3 consecutive transmembrane segments (helical) span residues 16 to 36, 53 to 73, and 93 to 113; these read IGPVTIHFYALCILLGIVLAV, ILDITLVAVPSGIIGARIYHI, and IWNGGLGIWGGVLLGALAAWA. Residue arginine 141 coordinates a 1,2-diacyl-sn-glycero-3-phospho-(1'-sn-glycerol). Transmembrane regions (helical) follow at residues 190–210, 220–240, and 253–273; these read PTFLYEMIWNLIGAALIVFLG, GSLFAIYIMWYTVGRTWIEAL, and INVWVSMAVFVLGVVAFIVIQ.

The protein belongs to the Lgt family.

Its subcellular location is the cell membrane. The catalysed reaction is L-cysteinyl-[prolipoprotein] + a 1,2-diacyl-sn-glycero-3-phospho-(1'-sn-glycerol) = an S-1,2-diacyl-sn-glyceryl-L-cysteinyl-[prolipoprotein] + sn-glycerol 1-phosphate + H(+). It functions in the pathway protein modification; lipoprotein biosynthesis (diacylglyceryl transfer). In terms of biological role, catalyzes the transfer of the diacylglyceryl group from phosphatidylglycerol to the sulfhydryl group of the N-terminal cysteine of a prolipoprotein, the first step in the formation of mature lipoproteins. In Bifidobacterium adolescentis (strain ATCC 15703 / DSM 20083 / NCTC 11814 / E194a), this protein is Phosphatidylglycerol--prolipoprotein diacylglyceryl transferase.